The following is a 362-amino-acid chain: 3-dehydroquinate synthase (362 aa).

Residues 71–76 (DGEQYK), 105–109 (GVVGD), 129–130 (TT), K142, K151, and 169–172 (CLKT) each bind NAD(+). Zn(2+) is bound by residues E184, H247, and H264.

This sequence belongs to the sugar phosphate cyclases superfamily. Dehydroquinate synthase family. Co(2+) is required as a cofactor. Requires Zn(2+) as cofactor. It depends on NAD(+) as a cofactor.

Its subcellular location is the cytoplasm. The enzyme catalyses 7-phospho-2-dehydro-3-deoxy-D-arabino-heptonate = 3-dehydroquinate + phosphate. The protein operates within metabolic intermediate biosynthesis; chorismate biosynthesis; chorismate from D-erythrose 4-phosphate and phosphoenolpyruvate: step 2/7. In terms of biological role, catalyzes the conversion of 3-deoxy-D-arabino-heptulosonate 7-phosphate (DAHP) to dehydroquinate (DHQ). The protein is 3-dehydroquinate synthase of Shigella dysenteriae serotype 1 (strain Sd197).